The chain runs to 397 residues: Acetate kinase 2 (397 aa).

Asparagine 10 provides a ligand contact to Mg(2+). An ATP-binding site is contributed by lysine 17. Arginine 90 contributes to the substrate binding site. Catalysis depends on aspartate 147, which acts as the Proton donor/acceptor. ATP-binding positions include 207 to 211 (HLGNG), 281 to 283 (DAR), and 329 to 333 (GIGEN). Glutamate 385 serves as a coordination point for Mg(2+).

The protein belongs to the acetokinase family. Homodimer. It depends on Mg(2+) as a cofactor. Requires Mn(2+) as cofactor.

The protein localises to the cytoplasm. The enzyme catalyses acetate + ATP = acetyl phosphate + ADP. Its pathway is metabolic intermediate biosynthesis; acetyl-CoA biosynthesis; acetyl-CoA from acetate: step 1/2. In terms of biological role, catalyzes the formation of acetyl phosphate from acetate and ATP. Can also catalyze the reverse reaction. This Aliivibrio fischeri (strain ATCC 700601 / ES114) (Vibrio fischeri) protein is Acetate kinase 2.